The primary structure comprises 569 residues: Oxygen-dependent choline dehydrogenase (569 aa).

Position 9-38 (9-38 (DYVIIGGGSAGSVLGNRLSEDKDKEVLVLE)) interacts with FAD. The Proton acceptor role is filled by histidine 475.

The protein belongs to the GMC oxidoreductase family. FAD is required as a cofactor.

It catalyses the reaction choline + A = betaine aldehyde + AH2. The enzyme catalyses betaine aldehyde + NAD(+) + H2O = glycine betaine + NADH + 2 H(+). It functions in the pathway amine and polyamine biosynthesis; betaine biosynthesis via choline pathway; betaine aldehyde from choline (cytochrome c reductase route): step 1/1. In terms of biological role, involved in the biosynthesis of the osmoprotectant glycine betaine. Catalyzes the oxidation of choline to betaine aldehyde and betaine aldehyde to glycine betaine at the same rate. In Staphylococcus aureus (strain COL), this protein is Oxygen-dependent choline dehydrogenase.